Reading from the N-terminus, the 145-residue chain is D-aminoacyl-tRNA deacylase (145 aa).

The short motif at 137 to 138 (GP) is the Gly-cisPro motif, important for rejection of L-amino acids element.

This sequence belongs to the DTD family. Homodimer.

It is found in the cytoplasm. The enzyme catalyses glycyl-tRNA(Ala) + H2O = tRNA(Ala) + glycine + H(+). The catalysed reaction is a D-aminoacyl-tRNA + H2O = a tRNA + a D-alpha-amino acid + H(+). Functionally, an aminoacyl-tRNA editing enzyme that deacylates mischarged D-aminoacyl-tRNAs. Also deacylates mischarged glycyl-tRNA(Ala), protecting cells against glycine mischarging by AlaRS. Acts via tRNA-based rather than protein-based catalysis; rejects L-amino acids rather than detecting D-amino acids in the active site. By recycling D-aminoacyl-tRNA to D-amino acids and free tRNA molecules, this enzyme counteracts the toxicity associated with the formation of D-aminoacyl-tRNA entities in vivo and helps enforce protein L-homochirality. The polypeptide is D-aminoacyl-tRNA deacylase (Pseudomonas syringae pv. syringae (strain B728a)).